Here is a 272-residue protein sequence, read N- to C-terminus: NH(3)-dependent NAD(+) synthetase (272 aa).

45 to 52 (GISGGQDS) contributes to the ATP binding site. Aspartate 51 contacts Mg(2+). Arginine 138 contributes to the deamido-NAD(+) binding site. Position 158 (threonine 158) interacts with ATP. Glutamate 163 lines the Mg(2+) pocket. Lysine 171 and aspartate 178 together coordinate deamido-NAD(+). 2 residues coordinate ATP: lysine 187 and threonine 209. 258-259 (HK) lines the deamido-NAD(+) pocket.

Belongs to the NAD synthetase family. As to quaternary structure, homodimer.

It carries out the reaction deamido-NAD(+) + NH4(+) + ATP = AMP + diphosphate + NAD(+) + H(+). It functions in the pathway cofactor biosynthesis; NAD(+) biosynthesis; NAD(+) from deamido-NAD(+) (ammonia route): step 1/1. Its function is as follows. Catalyzes the ATP-dependent amidation of deamido-NAD to form NAD. Uses ammonia as a nitrogen source. This Bacillus mycoides (strain KBAB4) (Bacillus weihenstephanensis) protein is NH(3)-dependent NAD(+) synthetase.